Consider the following 190-residue polypeptide: Cytoglobin (190 aa).

The segment at 1 to 21 (MEKVPGDMEIERRERNEELSE) is disordered. Residues 18–167 (ELSEAERKAV…IYSHVTAAYK (150 aa)) enclose the Globin domain. Cysteine 38 and cysteine 83 are disulfide-bonded. Heme b-binding residues include histidine 81 and histidine 113.

The protein belongs to the globin family. As to quaternary structure, monomeric. Homodimer; disulfide-linked in vitro. Also homooligomeric in vitro. Post-translationally, the formation of an intramolecular disulfide bond between cysteines Cys-38 and Cys-83 specifically enhances the nitrite reductase activity. Widely expressed (at protein level).

The protein localises to the cytoplasm. Its subcellular location is the nucleus. The enzyme catalyses Fe(II)-heme b-[protein] + nitric oxide + O2 = Fe(III)-heme b-[protein] + nitrate. It carries out the reaction Fe(III)-heme b-[protein] + nitric oxide + H2O = Fe(II)-heme b-[protein] + nitrite + 2 H(+). The catalysed reaction is 2 superoxide + 2 H(+) = H2O2 + O2. It catalyses the reaction H2O2 + AH2 = A + 2 H2O. Its activity is regulated as follows. The nitric oxide dioxygenase activity is activated by a reducing system composed of cytochrome b5, its upstream reductase CYB5R3 and NADH. In terms of biological role, probable multifunctional globin with a hexacoordinated heme iron required for the catalysis of various reactions depending on redox condition of the cell as well as oxygen availability. Has a nitric oxide dioxygenase (NOD) activity and is most probably involved in cell-mediated and oxygen-dependent nitric oxide consumption. By scavenging this second messenger may regulate several biological processes including endothelium-mediated vasodilation and vascular tone. Under normoxic conditions functions as a nitric oxide dioxygenase (NOD) but under hypoxic conditions the globin may switch its function to that of a nitrite (NO2) reductase (NiR), generating nitric oxide. Could also have peroxidase and superoxide dismutase activities, detoxifying reactive oxygen species and protecting cells against oxidative stress. Also binds dioxygen with low affinity and could function as an oxygen sensor but has probably no function as a respiratory oxygen carrier. This is Cytoglobin from Rattus norvegicus (Rat).